Here is a 133-residue protein sequence, read N- to C-terminus: P2Y purinoceptor 2 (133 aa).

The Cytoplasmic segment spans residues 1–26 (ISVHRCLGVLRPLHSLRWGRARYARR). Residues 27 to 47 (VAFAVWVLVLYCQAPVLYFVT) form a helical membrane-spanning segment. The Extracellular segment spans residues 48-74 (TSTRSSRIICHDTSARELFSHFVAYSS). Residues 75 to 95 (VMLSLLFAAPFAVILVCYVLM) traverse the membrane as a helical segment. At 96–116 (ARRLLKPAYGTSGGLPRAKRK) the chain is on the cytoplasmic side. A helical transmembrane segment spans residues 117–133 (SVRTIAIVLTVFVLCFL).

It belongs to the G-protein coupled receptor 1 family.

It is found in the cell membrane. Receptor for ATP and UTP coupled to G-proteins that activate a phosphatidylinositol-calcium second messenger system. The chain is P2Y purinoceptor 2 (P2RY2) from Bos taurus (Bovine).